Here is a 366-residue protein sequence, read N- to C-terminus: Cobalt-precorrin-5B C(1)-methyltransferase (366 aa).

This sequence belongs to the CbiD family.

It carries out the reaction Co-precorrin-5B + S-adenosyl-L-methionine = Co-precorrin-6A + S-adenosyl-L-homocysteine. The protein operates within cofactor biosynthesis; adenosylcobalamin biosynthesis; cob(II)yrinate a,c-diamide from sirohydrochlorin (anaerobic route): step 6/10. Functionally, catalyzes the methylation of C-1 in cobalt-precorrin-5B to form cobalt-precorrin-6A. This is Cobalt-precorrin-5B C(1)-methyltransferase from Pseudomonas paraeruginosa (strain DSM 24068 / PA7) (Pseudomonas aeruginosa (strain PA7)).